The following is a 124-amino-acid chain: Suppressor of RNA silencing (124 aa).

Residues 1–14 are basic motif (BM); the sequence is MPKSEFFREERKRR. The C-2 stretch occupies residues 30-68; that stretch reads CGYSCGMPPAVEKVSVPADTEEDVYMLIFPYEQFCGEKH. The stretch at 72–124 forms a coiled coil; sequence YESLKDVSDDELKLRRLERQRETLLASFQQKLKRYDEKIALLSEKFKNLRSKL. A Phosphoserine modification is found at Ser-79.

This sequence belongs to the virgaviridae suppressor of RNA silencing family. Homooligomer. Post-translationally, phosphorylated at Ser-79 by a host PKA-like kinase; the phosphorylation at this site seems to suppress host cell death.

It localises to the host chloroplast envelope. It is found in the host endoplasmic reticulum. Its subcellular location is the host cell junction. The protein resides in the host plasmodesma. Functionally, suppressor of RNA-mediated gene silencing, also known as post-transcriptional gene silencing (PTGS), a mechanism of plant viral defense that limits the accumulation of viral RNAs. Promotes viral cell-to-cell long distance movement. The polypeptide is Suppressor of RNA silencing (Peanut clump virus (isolate 87/TGTA2) (PCV)).